The primary structure comprises 47 residues: UPF0391 membrane protein rrnAC2507 (47 aa).

A run of 2 helical transmembrane segments spans residues 5 to 25 (VVLV…IAGL) and 27 to 47 (FRVA…TFLL).

This sequence belongs to the UPF0391 family.

The protein localises to the cell membrane. This chain is UPF0391 membrane protein rrnAC2507, found in Haloarcula marismortui (strain ATCC 43049 / DSM 3752 / JCM 8966 / VKM B-1809) (Halobacterium marismortui).